A 384-amino-acid chain; its full sequence is N-acetylneuraminate epimerase (384 aa).

An N-terminal signal peptide occupies residues methionine 1–alanine 24. 7 Kelch repeats span residues lysine 46 to glycine 90, tyrosine 92 to aspartate 145, arginine 147 to aspartate 184, aspartate 185 to glycine 230, valine 233 to alanine 281, glutamine 303 to glutamate 352, and valine 354 to isoleucine 383. Catalysis depends on glutamate 239, which acts as the Proton acceptor.

This sequence belongs to the NanM family. Homodimer.

Its subcellular location is the periplasm. The enzyme catalyses N-acetyl-alpha-neuraminate = N-acetyl-beta-neuraminate. In terms of biological role, converts alpha-N-acetylneuranimic acid (Neu5Ac) to the beta-anomer, accelerating the equilibrium between the alpha- and beta-anomers. Probably facilitates sialidase-negative bacteria to compete successfully for limited amounts of extracellular Neu5Ac, which is likely taken up in the beta-anomer. In addition, the rapid removal of sialic acid from solution might be advantageous to the bacterium to damp down host responses. The polypeptide is N-acetylneuraminate epimerase (Vibrio cholerae serotype O1 (strain ATCC 39315 / El Tor Inaba N16961)).